Here is a 270-residue protein sequence, read N- to C-terminus: Shikimate dehydrogenase (NADP(+)) (270 aa).

Shikimate-binding positions include 14-16 and T61; that span reads SKS. The active-site Proton acceptor is K65. Residues N86 and D101 each contribute to the shikimate site. Residues 126 to 130, 150 to 155, and M213 contribute to the NADP(+) site; these read GAGGA and NRTVSK. Y215 is a binding site for shikimate. Residue G237 coordinates NADP(+).

It belongs to the shikimate dehydrogenase family. Homodimer.

It catalyses the reaction shikimate + NADP(+) = 3-dehydroshikimate + NADPH + H(+). It functions in the pathway metabolic intermediate biosynthesis; chorismate biosynthesis; chorismate from D-erythrose 4-phosphate and phosphoenolpyruvate: step 4/7. In terms of biological role, involved in the biosynthesis of the chorismate, which leads to the biosynthesis of aromatic amino acids. Catalyzes the reversible NADPH linked reduction of 3-dehydroshikimate (DHSA) to yield shikimate (SA). The polypeptide is Shikimate dehydrogenase (NADP(+)) (Hahella chejuensis (strain KCTC 2396)).